A 271-amino-acid polypeptide reads, in one-letter code: Transmembrane protein 150A (271 aa).

Topologically, residues 1 to 3 are cytoplasmic; the sequence is MTG. A helical membrane pass occupies residues 4-24; the sequence is WIVLPISLTAFSIPGIWIVYA. Over 25-75 the chain is Extracellular; that stretch reads MAVMNHHVCPVENWTYNLTCTDDNTKAGTPKSCCTLEDVPLISKCGTYPPE. N-linked (GlcNAc...) asparagine glycosylation is found at asparagine 37 and asparagine 41. A helical membrane pass occupies residues 76 to 96; it reads SCLFSLIGNVGAFMVVIICLL. Over 97–108 the chain is Cytoplasmic; sequence RYSQVIEISQRS. A helical transmembrane segment spans residues 109 to 129; that stretch reads WLNTTALIAGCTNAAGLVMVG. The Extracellular portion of the chain corresponds to 130 to 140; it reads NFQVDYAKSLH. A helical transmembrane segment spans residues 141 to 161; that stretch reads YIGAGVAFPAGLLFVCLSSIL. The Cytoplasmic segment spans residues 162 to 182; the sequence is SYQLAASALDYWLGHLRVSLT. Residues 183 to 203 traverse the membrane as a helical segment; it reads IVALISLVLTGVFFIQESFLM. At 204–205 the chain is on the extracellular side; the sequence is QH. A helical transmembrane segment spans residues 206-226; it reads LVAICEWIFVLDILVFYGTFA. Topologically, residues 227–271 are cytoplasmic; sequence YEFGSVSTDTMMAALQSSAARSCKSPGSSSTSTQLHCNAERIAMI.

The protein belongs to the DRAM/TMEM150 family.

It is found in the cell membrane. Functionally, regulates localization of phosphatidylinositol 4-kinase (PI4K) to the plasma membrane. In Xenopus laevis (African clawed frog), this protein is Transmembrane protein 150A (tmem150a).